A 510-amino-acid chain; its full sequence is Light-independent protochlorophyllide reductase subunit B (510 aa).

Position 36 (aspartate 36) interacts with [4Fe-4S] cluster. Aspartate 296 (proton donor) is an active-site residue. A substrate-binding site is contributed by 431 to 432 (GM).

Belongs to the ChlB/BchB/BchZ family. In terms of assembly, protochlorophyllide reductase is composed of three subunits; ChlL, ChlN and ChlB. Forms a heterotetramer of two ChlB and two ChlN subunits. It depends on [4Fe-4S] cluster as a cofactor.

It carries out the reaction chlorophyllide a + oxidized 2[4Fe-4S]-[ferredoxin] + 2 ADP + 2 phosphate = protochlorophyllide a + reduced 2[4Fe-4S]-[ferredoxin] + 2 ATP + 2 H2O. The protein operates within porphyrin-containing compound metabolism; chlorophyll biosynthesis (light-independent). Component of the dark-operative protochlorophyllide reductase (DPOR) that uses Mg-ATP and reduced ferredoxin to reduce ring D of protochlorophyllide (Pchlide) to form chlorophyllide a (Chlide). This reaction is light-independent. The NB-protein (ChlN-ChlB) is the catalytic component of the complex. This Synechococcus sp. (strain JA-3-3Ab) (Cyanobacteria bacterium Yellowstone A-Prime) protein is Light-independent protochlorophyllide reductase subunit B.